A 418-amino-acid chain; its full sequence is Bifunctional protein GlmU (418 aa).

Positions 1 to 236 (MAAVIVLAAG…VWQTEGVNDR (236 aa)) are pyrophosphorylase. Residues 7–10 (LAAG), Lys-21, Gln-74, 79–80 (GT), 102–104 (YGD), Gly-141, Glu-155, Asn-170, and Asn-234 each bind UDP-N-acetyl-alpha-D-glucosamine. Asp-104 is a binding site for Mg(2+). Asn-234 is a binding site for Mg(2+). Residues 237–257 (VQLARMNAEVNRRIVTGWMRA) are linker. The interval 258–418 (GVTIIDPTST…DDTLNPEADQ (161 aa)) is N-acetyltransferase. UDP-N-acetyl-alpha-D-glucosamine contacts are provided by Arg-339 and Lys-357. Residue His-369 is the Proton acceptor of the active site. Residue Tyr-372 participates in UDP-N-acetyl-alpha-D-glucosamine binding. Ala-386 contacts acetyl-CoA.

This sequence in the N-terminal section; belongs to the N-acetylglucosamine-1-phosphate uridyltransferase family. In the C-terminal section; belongs to the transferase hexapeptide repeat family. Homotrimer. Mg(2+) serves as cofactor.

The protein localises to the cytoplasm. The catalysed reaction is alpha-D-glucosamine 1-phosphate + acetyl-CoA = N-acetyl-alpha-D-glucosamine 1-phosphate + CoA + H(+). It catalyses the reaction N-acetyl-alpha-D-glucosamine 1-phosphate + UTP + H(+) = UDP-N-acetyl-alpha-D-glucosamine + diphosphate. It participates in nucleotide-sugar biosynthesis; UDP-N-acetyl-alpha-D-glucosamine biosynthesis; N-acetyl-alpha-D-glucosamine 1-phosphate from alpha-D-glucosamine 6-phosphate (route II): step 2/2. It functions in the pathway nucleotide-sugar biosynthesis; UDP-N-acetyl-alpha-D-glucosamine biosynthesis; UDP-N-acetyl-alpha-D-glucosamine from N-acetyl-alpha-D-glucosamine 1-phosphate: step 1/1. Its pathway is bacterial outer membrane biogenesis; LPS lipid A biosynthesis. Catalyzes the last two sequential reactions in the de novo biosynthetic pathway for UDP-N-acetylglucosamine (UDP-GlcNAc). The C-terminal domain catalyzes the transfer of acetyl group from acetyl coenzyme A to glucosamine-1-phosphate (GlcN-1-P) to produce N-acetylglucosamine-1-phosphate (GlcNAc-1-P), which is converted into UDP-GlcNAc by the transfer of uridine 5-monophosphate (from uridine 5-triphosphate), a reaction catalyzed by the N-terminal domain. The polypeptide is Bifunctional protein GlmU (Cutibacterium acnes (strain DSM 16379 / KPA171202) (Propionibacterium acnes)).